A 205-amino-acid polypeptide reads, in one-letter code: Cytochrome c biogenesis ATP-binding export protein CcmA 1 (205 aa).

One can recognise an ABC transporter domain in the interval 2–205; it reads LEARDLYCER…LALTGGGAGL (204 aa). ATP is bound at residue 34-41; that stretch reads GGNGAGKT.

Belongs to the ABC transporter superfamily. CcmA exporter (TC 3.A.1.107) family. In terms of assembly, the complex is composed of two ATP-binding proteins (CcmA) and two transmembrane proteins (CcmB).

The protein resides in the cell inner membrane. It carries out the reaction heme b(in) + ATP + H2O = heme b(out) + ADP + phosphate + H(+). Its function is as follows. Part of the ABC transporter complex CcmAB involved in the biogenesis of c-type cytochromes; once thought to export heme, this seems not to be the case, but its exact role is uncertain. Responsible for energy coupling to the transport system. This chain is Cytochrome c biogenesis ATP-binding export protein CcmA 1, found in Salmonella typhimurium (strain LT2 / SGSC1412 / ATCC 700720).